The chain runs to 65 residues: Metallothionein-like protein type 3 (65 aa).

The protein belongs to the metallothionein superfamily. Type 15 family.

Its function is as follows. Metallothioneins have a high content of cysteine residues that bind various heavy metals. The protein is Metallothionein-like protein type 3 of Carica papaya (Papaya).